Reading from the N-terminus, the 151-residue chain is Small ribosomal subunit protein uS19 (151 aa).

The protein belongs to the universal ribosomal protein uS19 family.

The chain is Small ribosomal subunit protein uS19 (RPS15) from Picea mariana (Black spruce).